Consider the following 35-residue polypeptide: Cupiennin-1c (35 aa).

A Glutamic acid 1-amide modification is found at E35.

As to expression, expressed by the venom gland.

The protein localises to the secreted. Has antimicrobial activity against E.coli, E.faecalis, P.aeruginosa, and S.aureus. The chain is Cupiennin-1c from Cupiennius salei (American wandering spider).